We begin with the raw amino-acid sequence, 316 residues long: Ribosomal RNA small subunit methyltransferase H (316 aa).

S-adenosyl-L-methionine-binding positions include 35 to 37 (GGH), D55, Y79, D100, and Q107.

Belongs to the methyltransferase superfamily. RsmH family.

It localises to the cytoplasm. It carries out the reaction cytidine(1402) in 16S rRNA + S-adenosyl-L-methionine = N(4)-methylcytidine(1402) in 16S rRNA + S-adenosyl-L-homocysteine + H(+). Its function is as follows. Specifically methylates the N4 position of cytidine in position 1402 (C1402) of 16S rRNA. The sequence is that of Ribosomal RNA small subunit methyltransferase H from Nitrosospira multiformis (strain ATCC 25196 / NCIMB 11849 / C 71).